Reading from the N-terminus, the 88-residue chain is MVKLRLQRTGTKHDPHYRIVAADGRAPRDGKFVDIVGHYHPAQIKEQTTFHKEKILTWLKNGARPTETVLNLFKSAGIWAEYKTALKK.

This sequence belongs to the bacterial ribosomal protein bS16 family.

The polypeptide is Small ribosomal subunit protein bS16 (Leptospira borgpetersenii serovar Hardjo-bovis (strain L550)).